The following is an 862-amino-acid chain: Active breakpoint cluster region-related protein (862 aa).

Positions 30-84 (DAEGNEEHKSSREGSETMPYIDESPTMSPQLSARSQDSVDGVSPTPTEVLLPGGE) are disordered. Residues 34–44 (NEEHKSSREGS) are compositionally biased toward basic and acidic residues. The segment covering 54-67 (PTMSPQLSARSQDS) has biased composition (polar residues). A DH domain is found at 93-286 (MRKLVLSGVL…QNFLSSINED (194 aa)). One can recognise a PH domain in the interval 303–462 (QLVKDGFLVE…WREAIQKLQK (160 aa)). Residues 488–616 (VHNVPIISHK…QSKNWHDDVI (129 aa)) enclose the C2 domain. A Rho-GAP domain is found at 650–848 (VKISVVTKRE…YYLQHPPISF (199 aa)).

Its subcellular location is the cell projection. It is found in the dendritic spine. It localises to the axon. The protein localises to the synapse. Protein with a unique structure having two opposing regulatory activities toward small GTP-binding proteins. The C-terminus is a GTPase-activating protein domain which stimulates GTP hydrolysis by RAC1, RAC2 and CDC42. Accelerates the intrinsic rate of GTP hydrolysis of RAC1 or CDC42, leading to down-regulation of the active GTP-bound form. The central Dbl homology (DH) domain functions as guanine nucleotide exchange factor (GEF) that modulates the GTPases CDC42, RHOA and RAC1. Promotes the conversion of CDC42, RHOA and RAC1 from the GDP-bound to the GTP-bound form. This is Active breakpoint cluster region-related protein (abr) from Xenopus tropicalis (Western clawed frog).